Reading from the N-terminus, the 253-residue chain is DNA repair protein RecO (253 aa).

This sequence belongs to the RecO family.

Functionally, involved in DNA repair and RecF pathway recombination. In Streptococcus agalactiae serotype III (strain NEM316), this protein is DNA repair protein RecO.